We begin with the raw amino-acid sequence, 400 residues long: Acetate kinase (400 aa).

Mg(2+) is bound at residue N10. K17 provides a ligand contact to ATP. R91 contacts substrate. The Proton donor/acceptor role is filled by D150. ATP-binding positions include 210 to 214, 285 to 287, and 333 to 337; these read HLGNG, DCR, and GIGEN. Residue E387 participates in Mg(2+) binding.

This sequence belongs to the acetokinase family. In terms of assembly, homodimer. The cofactor is Mg(2+). It depends on Mn(2+) as a cofactor.

It localises to the cytoplasm. It carries out the reaction acetate + ATP = acetyl phosphate + ADP. Its pathway is metabolic intermediate biosynthesis; acetyl-CoA biosynthesis; acetyl-CoA from acetate: step 1/2. Catalyzes the formation of acetyl phosphate from acetate and ATP. Can also catalyze the reverse reaction. The polypeptide is Acetate kinase (Yersinia pestis bv. Antiqua (strain Antiqua)).